The sequence spans 89 residues: Phasin PhaP (89 aa).

Helix stretches follow at residues 3 to 26 (TQFF…TWME) and 39 to 83 (DTFE…ALRQ).

As to quaternary structure, homotetramer.

It is found in the cellular thylakoid membrane. Its subcellular location is the cytoplasm. The protein operates within biopolymer metabolism; poly-(R)-3-hydroxybutanoate biosynthesis. Its function is as follows. A phasin, it attaches to the polyhydroxybutyrate (PHB) granule surface regulating the number and size of PHB granules within a cell. It probably also acts as a regulator affecting the biosynthetic activity of PHB synthase in vivo. This Synechocystis sp. (strain ATCC 27184 / PCC 6803 / Kazusa) protein is Phasin PhaP.